Consider the following 326-residue polypeptide: UPF0324 membrane protein PBPRB0970 (326 aa).

Transmembrane regions (helical) follow at residues 27–49 (FFIIALLCLLPIISSPVALILGF), 70–89 (LLAYSIIGLGFGIHLDQAIA), 94–116 (GFGLIVGSIFFTLIFGWFLTKAL), 123–145 (GHLIASGTAICGGSAIAAVAPAI), 155–177 (ALATVFVLNSIALFIFPAIGHLL), 184–206 (FGTWAAIAIHDTSSVVGAAGAYG), 216–235 (IKLARALWIVPIAFLSALLF), 242–261 (IGIPYFILFYCLAIVFAHFV), 271–290 (IFVASKRLLVVCLFLIGSGI), and 303–325 (LLLGVLLWVAIGVGSLSYILLNV).

It belongs to the UPF0324 family.

Its subcellular location is the cell membrane. In Photobacterium profundum (strain SS9), this protein is UPF0324 membrane protein PBPRB0970.